Reading from the N-terminus, the 513-residue chain is MSDQLIIFDTTLRDGEQSPGASMTRDEKLRIARQLERLKVDVIEAGFAASSNGDFEAVKAIADVIKDSTICSLARANDRDISRAAEALRGANRARIHTFIATSALHMEKKLRMSPDEVLEQARLSVRFARNLCGDIEFSPEDGYRSDPDFLCRVLEAVIDEGATTLNIPDTVGYAIPELYGNFIRNLRERVPNSDKAIWSVHCHNDLGMAVANSLAGVKIGGARQVECTINGLGERAGNCSLEEVVMAVKTRRDYFGLDLRVDTSQIVPASRMVAQTTGFVVQPNKAVVGANAFAHASGIHQDGVLKARDTYEIMRAEDVGWSANKIVLGKLSGRNAFKQRLQDLGIALESEAEVNAAFMKFKDLADRKSEIFDEDILALVSDEQSDNQAEHYRLLALSQHSEMGERPHAEVAFAAGDVEHHARSDGNGPVDASIKAIESKVGTGAELLLYSVNAITSGSTESQGEVTVRLQLGGRIVNGVGADPDIVVASAKAYLAALNKLHSKAERVAAQG.

In terms of domain architecture, Pyruvate carboxyltransferase spans 5–268 (LIIFDTTLRD…DLRVDTSQIV (264 aa)). Mn(2+)-binding residues include Asp14, His202, His204, and Asn239. Residues 394 to 513 (RLLALSQHSE…SKAERVAAQG (120 aa)) form a regulatory domain region.

It belongs to the alpha-IPM synthase/homocitrate synthase family. LeuA type 1 subfamily. In terms of assembly, homodimer. Mn(2+) is required as a cofactor.

The protein resides in the cytoplasm. The catalysed reaction is 3-methyl-2-oxobutanoate + acetyl-CoA + H2O = (2S)-2-isopropylmalate + CoA + H(+). It participates in amino-acid biosynthesis; L-leucine biosynthesis; L-leucine from 3-methyl-2-oxobutanoate: step 1/4. Its function is as follows. Catalyzes the condensation of the acetyl group of acetyl-CoA with 3-methyl-2-oxobutanoate (2-ketoisovalerate) to form 3-carboxy-3-hydroxy-4-methylpentanoate (2-isopropylmalate). The polypeptide is 2-isopropylmalate synthase (Leptothrix cholodnii (strain ATCC 51168 / LMG 8142 / SP-6) (Leptothrix discophora (strain SP-6))).